Reading from the N-terminus, the 333-residue chain is Biotin synthase (333 aa).

The Radical SAM core domain occupies 51–278 (RAIQLSTLMS…KSYVRLSAGR (228 aa)). The [4Fe-4S] cluster site is built by cysteine 66, cysteine 70, and cysteine 73. [2Fe-2S] cluster is bound by residues cysteine 110, cysteine 141, cysteine 201, and arginine 273.

Belongs to the radical SAM superfamily. Biotin synthase family. As to quaternary structure, homodimer. [4Fe-4S] cluster is required as a cofactor. It depends on [2Fe-2S] cluster as a cofactor.

The catalysed reaction is (4R,5S)-dethiobiotin + (sulfur carrier)-SH + 2 reduced [2Fe-2S]-[ferredoxin] + 2 S-adenosyl-L-methionine = (sulfur carrier)-H + biotin + 2 5'-deoxyadenosine + 2 L-methionine + 2 oxidized [2Fe-2S]-[ferredoxin]. It participates in cofactor biosynthesis; biotin biosynthesis; biotin from 7,8-diaminononanoate: step 2/2. Catalyzes the conversion of dethiobiotin (DTB) to biotin by the insertion of a sulfur atom into dethiobiotin via a radical-based mechanism. This chain is Biotin synthase, found in Haemophilus influenzae (strain 86-028NP).